Reading from the N-terminus, the 188-residue chain is Defensin-like protein 99 (188 aa).

The signal sequence occupies residues 1 to 28; it reads MGSLKLSTVVVTALVVCLSILLISPTEA. 7 disulfide bridges follow: Cys-37–Cys-95, Cys-45–Cys-77, Cys-58–Cys-92, Cys-62–Cys-94, Cys-123–Cys-178, Cys-137–Cys-175, and Cys-141–Cys-177.

This sequence belongs to the DEFL family.

The protein resides in the secreted. In Arabidopsis thaliana (Mouse-ear cress), this protein is Defensin-like protein 99.